The sequence spans 118 residues: C-type natriuretic peptide 2 (118 aa).

The signal sequence occupies residues Met1 to Ala22. Positions Lys23–Lys96 are excised as a propeptide. The cysteines at positions 102 and 118 are disulfide-linked.

This sequence belongs to the natriuretic peptide family.

The protein resides in the secreted. Its function is as follows. Exhibits natriuretic and vasodepressor activity. Has a cGMP-stimulating activity. This chain is C-type natriuretic peptide 2, found in Aquarana catesbeiana (American bullfrog).